Reading from the N-terminus, the 623-residue chain is Stretch-activated cation channel MID1 (623 aa).

At Met1–Asp57 the chain is on the extracellular side. A helical transmembrane segment spans residues Leu58–Val78. Topologically, residues Ala79–Gly623 are cytoplasmic. Low complexity predominate over residues Thr524–Thr536. Positions Thr524–Pro544 are disordered. A required for targeting to the cell membrane region spans residues Ser600–Gly623.

In terms of assembly, forms an oligomer by disulfide bonds. Interacts with CCH1 to form a Ca(2+) influx channel. Interacts (via C-terminus) with CCP1/cytochrome c peroxidase; the interaction may contribute to cellular detoxification of radicals.

The protein localises to the cell membrane. Calcium-permeable, cation-selective stretch-activated channel (SAC) that functions together with CCH1 to mediate calcium entry into cells. May additionally play a role in cellular detoxification of radicals. This is Stretch-activated cation channel MID1 from Cryptococcus neoformans var. grubii serotype A (strain H99 / ATCC 208821 / CBS 10515 / FGSC 9487) (Filobasidiella neoformans var. grubii).